We begin with the raw amino-acid sequence, 265 residues long: Sarcotoxin II-1 (265 aa).

An N-terminal signal peptide occupies residues 1-22; that stretch reads MKSFVLFAACMAIIALGSLAHA. The propeptide at 23-24 is removed by a dipeptidylpeptidase; it reads YP. Gln-25 carries the post-translational modification Pyrrolidone carboxylic acid. Gly-264 carries the post-translational modification Glycine amide.

The protein belongs to the attacin/sarcotoxin-2 family. As to expression, synthesized by the fat body and is eventually secreted into the hemolymph.

The protein localises to the secreted. Sarcotoxin II is an antibacterial protein which plays a role in the inflammatory response of this insect. The main effect of sarcotoxin II on E.coli may be the inhibition of cell wall synthesis, including septum formation. This chain is Sarcotoxin II-1, found in Sarcophaga peregrina (Flesh fly).